A 227-amino-acid chain; its full sequence is Phosphatidylserine decarboxylase proenzyme (227 aa).

S169 acts as the Schiff-base intermediate with substrate; via pyruvic acid in catalysis. At S169 the chain carries Pyruvic acid (Ser); by autocatalysis. Residues 197-227 (GRIPTPESGRSSSAEATAAPSASSARRSSAS) form a disordered region. Positions 206–227 (RSSSAEATAAPSASSARRSSAS) are enriched in low complexity.

Belongs to the phosphatidylserine decarboxylase family. PSD-A subfamily. As to quaternary structure, heterodimer of a large membrane-associated beta subunit and a small pyruvoyl-containing alpha subunit. Pyruvate is required as a cofactor. In terms of processing, is synthesized initially as an inactive proenzyme. Formation of the active enzyme involves a self-maturation process in which the active site pyruvoyl group is generated from an internal serine residue via an autocatalytic post-translational modification. Two non-identical subunits are generated from the proenzyme in this reaction, and the pyruvate is formed at the N-terminus of the alpha chain, which is derived from the carboxyl end of the proenzyme. The post-translation cleavage follows an unusual pathway, termed non-hydrolytic serinolysis, in which the side chain hydroxyl group of the serine supplies its oxygen atom to form the C-terminus of the beta chain, while the remainder of the serine residue undergoes an oxidative deamination to produce ammonia and the pyruvoyl prosthetic group on the alpha chain.

It is found in the cell membrane. The catalysed reaction is a 1,2-diacyl-sn-glycero-3-phospho-L-serine + H(+) = a 1,2-diacyl-sn-glycero-3-phosphoethanolamine + CO2. The protein operates within phospholipid metabolism; phosphatidylethanolamine biosynthesis; phosphatidylethanolamine from CDP-diacylglycerol: step 2/2. In terms of biological role, catalyzes the formation of phosphatidylethanolamine (PtdEtn) from phosphatidylserine (PtdSer). The chain is Phosphatidylserine decarboxylase proenzyme from Salinibacter ruber (strain DSM 13855 / M31).